A 318-amino-acid polypeptide reads, in one-letter code: N-acyl-aromatic-L-amino acid amidohydrolase (carboxylate-forming) (318 aa).

The tract at residues 1–210 is hydrolytic domain; that stretch reads MSSLPGSREP…ILDFIELFNQ (210 aa). His21 and Glu24 together coordinate Zn(2+). Substrate-binding positions include Arg63 and 70-71; that span reads NR. Residue His116 coordinates Zn(2+). Substrate-binding residues include Glu177 and Tyr287. Residues 211–318 are shielding domain; that stretch reads GMDLPAFEMD…RLTPRSTQTP (108 aa). Position 317 is a phosphothreonine (Thr317).

Belongs to the AspA/AstE family. Aspartoacylase subfamily. Exists as a mixture of homodimers and homotetramer, both catalytically active. Zn(2+) is required as a cofactor. In terms of tissue distribution, expressed predominantly in kidney and to a lesser extent in liver. Weakly expressed in heart, small intestine, brain, lung, testis, and stomach.

The protein resides in the apical cell membrane. It is found in the cytoplasm. It catalyses the reaction an N-acyl-aromatic L-alpha-amino acid + H2O = an aromatic L-alpha-amino acid + a carboxylate. The enzyme catalyses an N-acetyl-L-cysteine-S-conjugate + H2O = an S-substituted L-cysteine + acetate. In terms of biological role, plays an important role in deacetylating mercapturic acids in kidney proximal tubules. Also acts on N-acetyl-aromatic amino acids. The chain is N-acyl-aromatic-L-amino acid amidohydrolase (carboxylate-forming) (Acy3) from Mus musculus (Mouse).